The primary structure comprises 287 residues: Undecaprenyl-diphosphatase (287 aa).

Helical transmembrane passes span 1–21, 49–69, 101–121, 126–146, 160–180, 203–223, 232–252, and 267–287; these read MALWIAVLLGVVQGIFMFLPV, MILFNLVVHVGTLVSIVVVFA, LFLLGMLSVLFTGVVGLTLKA, VFANPWMIAFTLILTGALLFW, TGVGTATLIGVAQGFALMPGL, YSFFLAIPTICAATLLQAIEV, VSVAALITGFVVAAGVGIVSL, and FSFYVWALAAAILLGWIDLPI.

It belongs to the UppP family.

Its subcellular location is the cell inner membrane. The enzyme catalyses di-trans,octa-cis-undecaprenyl diphosphate + H2O = di-trans,octa-cis-undecaprenyl phosphate + phosphate + H(+). Functionally, catalyzes the dephosphorylation of undecaprenyl diphosphate (UPP). Confers resistance to bacitracin. The polypeptide is Undecaprenyl-diphosphatase (Halorhodospira halophila (strain DSM 244 / SL1) (Ectothiorhodospira halophila (strain DSM 244 / SL1))).